A 707-amino-acid polypeptide reads, in one-letter code: Polyribonucleotide nucleotidyltransferase (707 aa).

Residues Asp-487 and Asp-493 each coordinate Mg(2+). Residues 554–613 (PKILTMNINPDKIRDVIGPSGKQINKIIEDTGVKIDIEQDGTIFISSTDESSNQKAKKII) form the KH domain. The S1 motif domain occupies 623–691 (GQLYLGKVKR…KQGRVNLSRK (69 aa)).

The protein belongs to the polyribonucleotide nucleotidyltransferase family. The cofactor is Mg(2+).

The protein resides in the cytoplasm. The catalysed reaction is RNA(n+1) + phosphate = RNA(n) + a ribonucleoside 5'-diphosphate. Involved in mRNA degradation. Catalyzes the phosphorolysis of single-stranded polyribonucleotides processively in the 3'- to 5'-direction. This chain is Polyribonucleotide nucleotidyltransferase, found in Bacillus velezensis (strain DSM 23117 / BGSC 10A6 / LMG 26770 / FZB42) (Bacillus amyloliquefaciens subsp. plantarum).